The sequence spans 222 residues: Probable elongation factor 1-beta (222 aa).

Positions 90–111 are disordered; it reads KPAADDDDDVDLFGSDDEEDEE. The segment covering 94–111 has biased composition (acidic residues); sequence DDDDDVDLFGSDDEEDEE. S104 is modified (phosphoserine).

Belongs to the EF-1-beta/EF-1-delta family. EF-1 is composed of 4 subunits: alpha, beta, beta' and gamma. Post-translationally, phosphorylation affects the GDP/GTP exchange rate.

In terms of biological role, EF-1-beta and EF-1-delta stimulate the exchange of GDP bound to EF-1-alpha to GTP. The chain is Probable elongation factor 1-beta from Drosophila melanogaster (Fruit fly).